The primary structure comprises 70 residues: Mu-agatoxin-Ao1b (70 aa).

The first 20 residues, 1–20, serve as a signal peptide directing secretion; the sequence is MKAIIFFCFLSVMVFIVAEA. The propeptide occupies 21–33; sequence SSLEALKIFEGER. 4 disulfide bridges follow: C35/C50, C42/C55, C49/C65, and C57/C63. At N69 the chain carries Asparagine amide.

Belongs to the neurotoxin 07 (Beta/delta-agtx) family. 04 (aga-5) subfamily. Expressed by the venom gland.

The protein localises to the secreted. Functionally, insecticidal neurotoxin that modulates the insect Nav channel (DmNaV1/tipE (para/tipE)) in a unique manner, with both the activation and inactivation processes being affected. The voltage dependence of activation is shifted toward more hyperpolarized potentials (analogous to site 4 toxins) and a non-inactivating persistent sodium current is induced (site 3-like action). Interestingly, both effects take place in a voltage-dependent manner, producing a bell-shaped curve between -80 and 0 mV. The polypeptide is Mu-agatoxin-Ao1b (Agelena orientalis (Funnel-web spider)).